Consider the following 727-residue polypeptide: ADP-ribosylation factor-binding protein GGA3 (727 aa).

A VHS domain is found at 16 to 146; the sequence is ATNPSNRQED…MLKRQGIVQS (131 aa). Ser-159 and Ser-275 each carry phosphoserine. Positions 171 to 298 constitute a GAT domain; sequence DEEKSKLLAK…VINSYKTIIE (128 aa). A unstructured hinge region spans residues 299–597; that stretch reads GQIINGEVTT…VHVPLESIKP (299 aa). Residues 334 to 385 form a disordered region; that stretch reads TPSSSSPVLAPAPAPPTSGIPILPPPPQTSGPPRSRSSSQAEAPSGPDSTNN. Positions 343 to 363 are enriched in pro residues; it reads APAPAPPTSGIPILPPPPQTS. Low complexity predominate over residues 364–374; the sequence is GPPRSRSSSQA. Positions 391–395 match the DXXLL motif; sequence DEELL. A disordered region spans residues 400–419; sequence SDPAPTAPKESAGNSPWHLF. The GAE domain maps to 598–719; sequence SSALPVTAYD…TELGEVDQFP (122 aa).

It belongs to the GGA protein family. As to quaternary structure, monomer. Interacts with GGA1 and GGA2. Binds to clathrin and activated ARFs, such as ARF1, ARF5 and ARF6. Binds RABEP1 and RABGEF1. Interacts with the membrane proteins M6PR/CD-MPR and IGF2R/CI-MPR and the accessory proteins SYNRG, EPN4, NECAP1, NECAP2 and AFTPH/aftiphilin. Interacts with TSG101 and UBC. Interacts with ADRA2B. Interacts with NTRK1; the interaction is independent of NTRK1 activation and ubiquitination. Interacts (via VHS domain) with BACE1 (via DXXLL motif). In terms of processing, phosphorylated by CK2 and dephosphorylated by PP2A. Phosphorylation of GGA3 allows the internal DXXLL motif to bind the VHS domain and to inhibit the recognition of cargo signals. Post-translationally, ubiquitinated. Proteolytically cleaved during apoptosis by CASP3.

Its subcellular location is the golgi apparatus. The protein resides in the trans-Golgi network membrane. It is found in the endosome membrane. The protein localises to the early endosome membrane. It localises to the recycling endosome membrane. Functionally, plays a role in protein sorting and trafficking between the trans-Golgi network (TGN) and endosomes. Mediates the ARF-dependent recruitment of clathrin to the TGN and binds ubiquitinated proteins and membrane cargo molecules with a cytosolic acidic cluster-dileucine (DXXLL) motif. Mediates export of the GPCR receptor ADRA2B to the cell surface. Involved in BACE1 transport and sorting as well as regulation of BACE1 protein levels. Regulates retrograde transport of BACE1 from endosomes to the trans-Golgi network via interaction through the VHS motif and dependent of BACE1 phosphorylation. Modulates BACE1 protein levels independently of the interaction between VHS domain and DXXLL motif through recognition of ubiquitination. Key player in a novel DXXLL-mediated endosomal sorting machinery to the recycling pathway that targets NTRK1 to the plasma membrane. The polypeptide is ADP-ribosylation factor-binding protein GGA3 (Rattus norvegicus (Rat)).